The primary structure comprises 549 residues: Nectin-3 (549 aa).

A signal peptide spans 1-57 (MARTPGPAPLCPGGGKAQLSSAFPPAAGLLLPAPTPPPLLLLLIPLLLFSRLCGALA). In terms of domain architecture, Ig-like V-type spans 58-165 (GSIIVEPHVT…GNAQSSTTVT (108 aa)). Topologically, residues 58 to 404 (GSIIVEPHVT…ATLKDDTIGT (347 aa)) are extracellular. N-linked (GlcNAc...) asparagine glycosylation is found at asparagine 73, asparagine 83, asparagine 125, asparagine 186, asparagine 222, and asparagine 331. Cysteine 78 and cysteine 148 are oxidised to a cystine. Ig-like C2-type domains lie at 170–258 (PTVS…KDIR) and 269–354 (PEVS…KVIY). Disulfide bonds link cysteine 193/cysteine 246 and cysteine 291/cysteine 338. A helical transmembrane segment spans residues 405–425 (IIASVVGGALFLVLVSILAGV). The Cytoplasmic portion of the chain corresponds to 426-549 (FCYRRRRTFR…SVISRREWYV (124 aa)).

The protein belongs to the nectin family. In terms of assembly, cis- and trans-homodimer. Can form trans-heterodimers with NECTIN1, NECTIN2, PVR, IGSF4B/Necl-1 and with IGSF4. Interaction between NECTIN1 and NECTIN3 on the pre- and postsynaptic sites, respectively, initiates the formation of puncta adherentia junctions between axons and dendrites. Interacts (via Cytoplasmic domain) with AFDN, providing a connection with the actin cytoskeleton. Binds with low affinity to TIGIT. Ubiquitous with high expression in testes. Localized in spermatids at Sertoli-spermatid junctions. Expressed in ovarian granulosa cells, but only faintly expressed after ovulation.

It localises to the cell membrane. The protein localises to the postsynaptic cell membrane. The protein resides in the cell junction. Its subcellular location is the adherens junction. In terms of biological role, cell adhesion molecule that promotes cell-cell adhesion through heterophilic trans-interactions with nectins-like or other nectins, such as trans-interaction with NECTIN2 at Sertoli-spermatid junctions. Trans-interaction with PVR induces activation of CDC42 and RAC small G proteins through common signaling molecules such as SRC and RAP1. Induces endocytosis-mediated down-regulation of PVR from the cell surface, resulting in reduction of cell movement and proliferation. Involved in axon guidance by promoting contacts between the commissural axons and the floor plate cells. Also involved in the formation of cell-cell junctions, including adherens junctions and synapses. Promotes formation of checkerboard-like cellular pattern of hair cells and supporting cells in the auditory epithelium via heterophilic interaction with NECTIN1: NECTIN1 is present in the membrane of hair cells and associates with NECTIN3 on supporting cells, thereby mediating heterotypic adhesion between these two cell types. Plays a role in the morphology of the ciliary body. This chain is Nectin-3, found in Mus musculus (Mouse).